The sequence spans 861 residues: Linoleate 9S-lipoxygenase 2 (861 aa).

The 132-residue stretch at 29–160 (NALDFTDLAG…RYKSDRIFFV (132 aa)) folds into the PLAT domain. In terms of domain architecture, Lipoxygenase spans 163-861 (PYLPSKTPEL…GKGIPNSVSI (699 aa)). Residues 212-246 (EGKENVRTTLGGSAEYPYPRRGRTGRPPTRTDPKS) form a disordered region. Fe cation is bound by residues histidine 522, histidine 527, histidine 713, asparagine 717, and isoleucine 861.

This sequence belongs to the lipoxygenase family. Monomer. The cofactor is Fe cation. Highly expressed in tubers and roots. Detected in flower buds and leaves.

It localises to the cytoplasm. The catalysed reaction is (9Z,12Z)-octadecadienoate + O2 = (9S)-hydroperoxy-(10E,12Z)-octadecadienoate. Its pathway is lipid metabolism; oxylipin biosynthesis. In terms of biological role, plant lipoxygenases may be involved in a number of diverse aspects of plant physiology including growth and development, pest resistance, and senescence or responses to wounding. Catalyzes the hydroperoxidation of lipids containing a cis,cis-1,4-pentadiene structure. Linoleic acid is the preferred substrate, but is also active with linolenic and arachidonic acids. This chain is Linoleate 9S-lipoxygenase 2 (LOX1.2), found in Solanum tuberosum (Potato).